The primary structure comprises 118 residues: Large ribosomal subunit protein uL24 (118 aa).

Belongs to the universal ribosomal protein uL24 family. Part of the 50S ribosomal subunit.

Its function is as follows. One of two assembly initiator proteins, it binds directly to the 5'-end of the 23S rRNA, where it nucleates assembly of the 50S subunit. Functionally, one of the proteins that surrounds the polypeptide exit tunnel on the outside of the subunit. This chain is Large ribosomal subunit protein uL24, found in Synechococcus sp. (strain CC9902).